The primary structure comprises 188 residues: MSLYALLLIALGMSMDAFAVALAKGAAVRMPPRKIAATALVFGTVEALTPLAGWVGGFYAKPFISEWDHWAAFVLLGGLGLKMMHEGLSGEAEDARENKRESWWLTVLTAFGTSIDSMIVGVGLAFMEVNIAFAAAIIGMATTVLVAVGLTVGRALGVLFGRRAEFAGGLVLIAIGTWTLLSHLGLIG.

Transmembrane regions (helical) follow at residues 3–23, 35–55, 70–90, 104–126, 140–160, and 167–187; these read LYAL…VALA, IAAT…AGWV, WAAF…GLSG, WLTV…GLAF, MATT…GVLF, and AGGL…LGLI.

It belongs to the MntP (TC 9.B.29) family.

The protein localises to the cell inner membrane. Functionally, probably functions as a manganese efflux pump. The sequence is that of Putative manganese efflux pump MntP from Neisseria meningitidis serogroup C / serotype 2a (strain ATCC 700532 / DSM 15464 / FAM18).